Consider the following 206-residue polypeptide: Small ribosomal subunit protein uS4 (206 aa).

The region spanning 96-158 (SRLDNVVYRM…AKGQLRIKGA (63 aa)) is the S4 RNA-binding domain.

The protein belongs to the universal ribosomal protein uS4 family. As to quaternary structure, part of the 30S ribosomal subunit. Contacts protein S5. The interaction surface between S4 and S5 is involved in control of translational fidelity.

Functionally, one of the primary rRNA binding proteins, it binds directly to 16S rRNA where it nucleates assembly of the body of the 30S subunit. Its function is as follows. With S5 and S12 plays an important role in translational accuracy. The sequence is that of Small ribosomal subunit protein uS4 from Coxiella burnetii (strain CbuK_Q154) (Coxiella burnetii (strain Q154)).